The following is a 335-amino-acid chain: 2-acylglycerol O-acyltransferase 1 (335 aa).

Helical transmembrane passes span Trp-24–Leu-44 and Tyr-104–Thr-124. N-linked (GlcNAc...) asparagine glycosylation occurs at Asn-180.

This sequence belongs to the diacylglycerol acyltransferase family. As to expression, expressed at high level in kidney and stomach. Expressed at lower level in brown and white adipose tissue, uterus and liver. Not detected in small intestine.

The protein resides in the endoplasmic reticulum membrane. The enzyme catalyses a 2-acylglycerol + an acyl-CoA = a 1,2-diacylglycerol + CoA. It catalyses the reaction 2-(9Z-octadecenoyl)-glycerol + butanoyl-CoA = 1-butanoyl-2-(9Z-octadecenoyl)-glycerol + CoA. It carries out the reaction 2-(9Z-octadecenoyl)-glycerol + octanoyl-CoA = 1-octanoyl-2-(9Z-octadecenoyl)-glycerol + CoA. The catalysed reaction is 2-(9Z-octadecenoyl)-glycerol + dodecanoyl-CoA = 1-dodecanoyl-2-(9Z-octadecenoyl)-glycerol + CoA. The enzyme catalyses 2-(9Z-octadecenoyl)-glycerol + tetradecanoyl-CoA = 1-tetradecanoyl-2-(9Z-octadecenoyl)-glycerol + CoA. It catalyses the reaction 2-(9Z-octadecenoyl)-glycerol + hexadecanoyl-CoA = 1-hexadecanoyl-2-(9Z-octadecenoyl)-glycerol + CoA. It carries out the reaction 2-(9Z-octadecenoyl)-glycerol + octadecanoyl-CoA = 1-octadecanoyl-2-(9Z-octadecenoyl)-glycerol + CoA. The catalysed reaction is eicosanoyl-CoA + 2-(9Z-octadecenoyl)-glycerol = 1-eicosanoyl-2-(9Z-octadecenoyl)-glycerol + CoA. The enzyme catalyses 2-(9Z-octadecenoyl)-glycerol + (9Z)-octadecenoyl-CoA = 1,2-di-(9Z-octadecenoyl)-glycerol + CoA. It catalyses the reaction 2-(9Z-octadecenoyl)-glycerol + (9Z,12Z)-octadecadienoyl-CoA = 1-(9Z,12Z-octadecadienoyl)-2-(9Z-octadecenoyl)-glycerol + CoA. It carries out the reaction 2-(9Z-octadecenoyl)-glycerol + (5Z,8Z,11Z,14Z)-eicosatetraenoyl-CoA = 1-(5Z,8Z,11Z,14Z-eicosatetraenoyl)-2-(9Z-octadecenoyl)-glycerol + CoA. The catalysed reaction is a 2-acylglycerol + an acyl-CoA = a 1,2-diacyl-sn-glycerol + CoA. The enzyme catalyses a 2-acylglycerol + an acyl-CoA = a 2,3-diacyl-sn-glycerol + CoA. It catalyses the reaction a 1-acylglycerol + an acyl-CoA = a 1,2-diacylglycerol + CoA. It carries out the reaction 1-dodecanoylglycerol + (9Z)-octadecenoyl-CoA = 1-dodecanoyl-2-(9Z-octadecenoyl)-glycerol + CoA. The catalysed reaction is 1-tetradecanoylglycerol + (9Z)-octadecenoyl-CoA = 1-tetradecanoyl-2-(9Z-octadecenoyl)-glycerol + CoA. The enzyme catalyses 1-hexadecanoylglycerol + (9Z)-octadecenoyl-CoA = 1-hexadecanoyl-2-(9Z-octadecenoyl)-glycerol + CoA. It catalyses the reaction 1-(9Z-octadecenoyl)-glycerol + (9Z)-octadecenoyl-CoA = 1,2-di-(9Z-octadecenoyl)-glycerol + CoA. It carries out the reaction 1-(9Z,12Z-octadecadienoyl)-glycerol + (9Z)-octadecenoyl-CoA = 1-(9Z,12Z-octadecadienoyl)-2-(9Z-octadecenoyl)-glycerol + CoA. The catalysed reaction is 1-(9Z,12Z,15Z-octadecatrienoyl)-glycerol + (9Z)-octadecenoyl-CoA = 1-(9Z,12Z,15Z-octadecatrienoyl)-2-(9Z-octadecenoyl)-glycerol + CoA. The enzyme catalyses 1-(5Z,8Z,11Z,14Z-eicosatetraenoyl)-glycerol + (9Z)-octadecenoyl-CoA = 1-(5Z,8Z,11Z,14Z-eicosatetraenoyl)-2-(9Z-octadecenoyl)-glycerol + CoA. It catalyses the reaction a 1-acylglycerol + an acyl-CoA = a 1,3-diacylglycerol + CoA. It carries out the reaction 1-dodecanoylglycerol + (9Z)-octadecenoyl-CoA = 1-dodecanoyl-3-(9Z-octadecenoyl)-glycerol + CoA. The catalysed reaction is 1-hexadecanoylglycerol + (9Z)-octadecenoyl-CoA = 1-(9Z-octadecenoyl)-3-hexadecanoylglycerol + CoA. The enzyme catalyses 1-octadecanoylglycerol + (9Z)-octadecenoyl-CoA = 1-octadecanoyl-3-(9Z-octadecenoyl)-glycerol + CoA. It catalyses the reaction 1-(9Z-octadecenoyl)-sn-glycerol + (9Z)-octadecenoyl-CoA = 1,3-di-(9Z-octadecenoyl)-glycerol + CoA. It carries out the reaction 1-(9Z,12Z-octadecadienoyl)-glycerol + (9Z)-octadecenoyl-CoA = 1-(9Z-octadecenoyl)-3-(9Z,12Z-octadecadienoyl)-glycerol + CoA. The catalysed reaction is 1-(9Z,12Z,15Z-octadecatrienoyl)-glycerol + (9Z)-octadecenoyl-CoA = 1-(9Z,12Z,15Z-octadecatrienoyl)-3-(9Z-octadecenoyl)-glycerol + CoA. The enzyme catalyses a 1-acyl-sn-glycerol + an acyl-CoA = a 1,3-diacyl-sn-glycerol + CoA. It catalyses the reaction a 3-acyl-sn-glycerol + an acyl-CoA = a 1,3-diacyl-sn-glycerol + CoA. It carries out the reaction 3-octadecanoyl-sn-glycerol + (9Z)-octadecenoyl-CoA = 1-(9Z-octadecenoyl)-3-octadecanoyl-sn-glycerol + CoA. It participates in glycerolipid metabolism; triacylglycerol biosynthesis. Its function is as follows. Involved in glycerolipid synthesis and lipid metabolism. Catalyzes the formation of diacylglycerol, the precursor of triacylglycerol, by transferring the acyl chain of a fatty acyl-CoA to a monoacylglycerol, mainly at the sn-1 or sn-3 positions. It uses both sn-2-monoacylglycerol (2-acylglycerol) and sn-1-monoacylglycerol (1-acyl-sn-glycerol) equally well as substrates, and uses sn-3-monoacylglycerol (3-acyl-sn-glycerol) with lower efficiency. Probably not involved in absorption of dietary fat in the small intestine. The sequence is that of 2-acylglycerol O-acyltransferase 1 from Mus musculus (Mouse).